The following is a 189-amino-acid chain: Segregation and condensation protein B (189 aa).

The protein belongs to the ScpB family. Homodimer. Homodimerization may be required to stabilize the binding of ScpA to the Smc head domains. Component of a cohesin-like complex composed of ScpA, ScpB and the Smc homodimer, in which ScpA and ScpB bind to the head domain of Smc. The presence of the three proteins is required for the association of the complex with DNA.

It is found in the cytoplasm. In terms of biological role, participates in chromosomal partition during cell division. May act via the formation of a condensin-like complex containing Smc and ScpA that pull DNA away from mid-cell into both cell halves. The protein is Segregation and condensation protein B of Streptococcus sanguinis (strain SK36).